The following is a 658-amino-acid chain: Threonine--tRNA ligase (658 aa).

The 64-residue stretch at 1–64 folds into the TGS domain; it reads MSNTVSLQFP…GASGKVEIIT (64 aa). The catalytic stretch occupies residues 246–548; that stretch reads DHRRLGREMD…LIENFAGHMP (303 aa). Cys-343, His-394, and His-525 together coordinate Zn(2+).

Belongs to the class-II aminoacyl-tRNA synthetase family. In terms of assembly, homodimer. Requires Zn(2+) as cofactor.

The protein localises to the cytoplasm. The catalysed reaction is tRNA(Thr) + L-threonine + ATP = L-threonyl-tRNA(Thr) + AMP + diphosphate + H(+). Catalyzes the attachment of threonine to tRNA(Thr) in a two-step reaction: L-threonine is first activated by ATP to form Thr-AMP and then transferred to the acceptor end of tRNA(Thr). Also edits incorrectly charged L-seryl-tRNA(Thr). In Brucella canis (strain ATCC 23365 / NCTC 10854 / RM-666), this protein is Threonine--tRNA ligase.